Consider the following 332-residue polypeptide: mRNA-decapping enzyme 1 (332 aa).

A compositionally biased stretch (low complexity) spans 141–173 (ARAAKAASEAPQASVPAPTQAPAAPAQAPQMAP). Positions 141 to 175 (ARAAKAASEAPQASVPAPTQAPAAPAQAPQMAPQA) are disordered.

The protein belongs to the DCP1 family. May be a component of the decapping complex composed of dcap-1 and dcap-2. As to expression, expressed in neurons including touch receptor neurons and motor neurons.

Its subcellular location is the cytoplasm. The protein resides in the cytoplasmic granule. Component of the decapping complex necessary for the degradation of mRNAs, both in normal mRNA turnover and in nonsense-mediated mRNA decay. In contrast to orthologs, does not possess decapping activity and does not remove the 7-methyl guanine cap structure from mRNA molecules. In the nervous system, negatively regulates the expression of insulin-like peptide ins-7, which in turn promotes longevity. This may in part be through promoting the activity of daf-16 in distal tissues. Required for the developmental axon guidance and regrowth of PLM touch receptor neurons. In ADL sensory neurons, plays a role in ciliary shape formation. Acts in neurons to promote larval survival at high temperatures by negatively regulating lin-14 expression. This is mRNA-decapping enzyme 1 from Caenorhabditis elegans.